A 190-amino-acid chain; its full sequence is Vascular endothelial growth factor A (190 aa).

Residues 1 to 26 form the signal peptide; the sequence is MNFLLSWVHWSLALLLYLHHAKWSQA. Cystine bridges form between Cys51-Cys93, Cys82-Cys127, and Cys86-Cys129. Residue Asn100 is glycosylated (N-linked (GlcNAc...) asparagine).

Belongs to the PDGF/VEGF growth factor family. In terms of assembly, homodimer; disulfide-linked. Also found as heterodimer with PGF. Interacts with NRP1. Interacts with BSG. Interacts with CD82; this interaction inhibits VEGFA-mediated signaling pathway.

The protein localises to the secreted. Functionally, growth factor active in angiogenesis, vasculogenesis and endothelial cell growth. Induces endothelial cell proliferation, promotes cell migration, inhibits apoptosis and induces permeabilization of blood vessels. Binds to the FLT1/VEGFR1 and KDR/VEGFR2 receptors, heparan sulfate and heparin. Binding to NRP1 receptor initiates a signaling pathway needed for motor neuron axon guidance and cell body migration, including for the caudal migration of facial motor neurons from rhombomere 4 to rhombomere 6 during embryonic development. Also binds the DEAR/FBXW7-AS1 receptor. The chain is Vascular endothelial growth factor A (VEGFA) from Bos taurus (Bovine).